The sequence spans 512 residues: Cytochrome P450 monooxygenase poxM (512 aa).

A helical transmembrane segment spans residues 15-35; sequence LLKGATIALSFFSLYLFGLVI. Residue Cys449 coordinates heme.

The protein belongs to the cytochrome P450 family. The cofactor is heme.

Its subcellular location is the membrane. The protein operates within secondary metabolite biosynthesis. Cytochrome P450 monooxygenase; part of the gene cluster that mediates the biosynthesis of oxaleimides, cytotoxic compounds containing an unusual disubstituted succinimide moiety. The first step of the pathway is provided by the HR-PKS poxF that serves in a new mode of collaborative biosynthesis with the PKS-NRPS poxE, by providing the olefin containing amino acid substrate via the synthesis of an ACP-bound dec-4-enoate. The cytochrome P450 monooxygenase poxM-catalyzed oxidation at the alpha-position creates the enzyme-bound 2-hydroxydec-4-enoyl-ACP thioester, which may be prone to spontaneous hydrolysis to yield 2-hydroxydec-4-enoic acid due to increased electrophilicity of the carbonyl. 2-hydroxydec-4-enoic acid can then be further oxidized by poxM to yield the alpha-ketoacid 2-oxodec-4-enoicacid, which is reductively aminated by the aminotransferase poxL to yield (S,E)-2-aminodec-4-enoic acid. The Hybrid PKS-NRPS synthetase poxE then performs condensation between the octaketide product of its PKS modules and the amino group of (S,E)-2-aminodec-4-enoic acid which is activated and incorporated by the adenylation domain. The resulting aminoacyl product can be cyclized by the Diels-Alderase PoxQ and reductively released by the reductive (R) domain of poxE to yield an aldehyde intermediate. The released aldehyde is then substrate for a Knoevenagel condensation by the hydrolyase poxO followed by an oxidation at the 5-position of the pyrrolidone ring. The presence of the olefin from the amino acid building block allows for migration of the substituted allyl group to occur. This allylic transposition reaction takes place in a conjugate addition, semipinacol-like fashion to yield a succinimide intermediate. Iterative two-electron oxidations of the C7 methyl of the succinimide intermediate to the carboxylic acid can be catalyzed by one of two remaining cytochrome P450 monooxygenasess poxC or poxD to yield oxaleimide A. Subsequent oxidation yields the maleimide scaffold oxaleimide I. Both oxaleimide A and oxaleimide I can undergo oxidative modifications in the decalin ring to yield the series of products oxaleimides B to H. This Penicillium oxalicum (strain 114-2 / CGMCC 5302) (Penicillium decumbens) protein is Cytochrome P450 monooxygenase poxM.